The sequence spans 157 residues: S-ribosylhomocysteine lyase (157 aa).

His-53, His-57, and Cys-124 together coordinate Fe cation.

This sequence belongs to the LuxS family. Homodimer. Requires Fe cation as cofactor.

It carries out the reaction S-(5-deoxy-D-ribos-5-yl)-L-homocysteine = (S)-4,5-dihydroxypentane-2,3-dione + L-homocysteine. Functionally, involved in the synthesis of autoinducer 2 (AI-2) which is secreted by bacteria and is used to communicate both the cell density and the metabolic potential of the environment. The regulation of gene expression in response to changes in cell density is called quorum sensing. Catalyzes the transformation of S-ribosylhomocysteine (RHC) to homocysteine (HC) and 4,5-dihydroxy-2,3-pentadione (DPD). The polypeptide is S-ribosylhomocysteine lyase (Borrelia garinii subsp. bavariensis (strain ATCC BAA-2496 / DSM 23469 / PBi) (Borreliella bavariensis)).